A 193-amino-acid chain; its full sequence is dCTP deaminase (193 aa).

Residues Arg-110 to Arg-115, Asp-128, Val-136 to Glu-138, Tyr-171, Lys-178, and Gln-182 each bind dCTP. The active-site Proton donor/acceptor is the Glu-138.

It belongs to the dCTP deaminase family. Homotrimer.

The enzyme catalyses dCTP + H2O + H(+) = dUTP + NH4(+). Its pathway is pyrimidine metabolism; dUMP biosynthesis; dUMP from dCTP (dUTP route): step 1/2. Functionally, catalyzes the deamination of dCTP to dUTP. This chain is dCTP deaminase, found in Aeromonas salmonicida (strain A449).